Consider the following 427-residue polypeptide: UDP-N-acetylglucosamine 1-carboxyvinyltransferase 2 (427 aa).

Residue 19–20 participates in phosphoenolpyruvate binding; the sequence is KN. Arg91 is a UDP-N-acetyl-alpha-D-glucosamine binding site. Cys115 acts as the Proton donor in catalysis. At Cys115 the chain carries 2-(S-cysteinyl)pyruvic acid O-phosphothioketal. UDP-N-acetyl-alpha-D-glucosamine contacts are provided by Asp307 and Val329.

Belongs to the EPSP synthase family. MurA subfamily.

It localises to the cytoplasm. It carries out the reaction phosphoenolpyruvate + UDP-N-acetyl-alpha-D-glucosamine = UDP-N-acetyl-3-O-(1-carboxyvinyl)-alpha-D-glucosamine + phosphate. The protein operates within cell wall biogenesis; peptidoglycan biosynthesis. Cell wall formation. Adds enolpyruvyl to UDP-N-acetylglucosamine. This chain is UDP-N-acetylglucosamine 1-carboxyvinyltransferase 2, found in Prochlorococcus marinus (strain SARG / CCMP1375 / SS120).